The primary structure comprises 605 residues: uncharacterized protein (605 aa).

Disordered stretches follow at residues 10-78 and 216-248; these read RRGG…FPPA and RAPDCPSPRTPMVKPPFRIPDAKPGLTPSVRNP. Residues 20-48 show a composition bias toward low complexity; that stretch reads AGGRPAAGGRPAAGGRPAAGSRAAAGAAG. A compositionally biased stretch (pro residues) spans 220 to 233; that stretch reads CPSPRTPMVKPPFR.

This is an uncharacterized protein from Dryophytes versicolor (chameleon treefrog).